The primary structure comprises 158 residues: Transcription elongation factor GreA (158 aa).

This sequence belongs to the GreA/GreB family.

Necessary for efficient RNA polymerase transcription elongation past template-encoded arresting sites. The arresting sites in DNA have the property of trapping a certain fraction of elongating RNA polymerases that pass through, resulting in locked ternary complexes. Cleavage of the nascent transcript by cleavage factors such as GreA or GreB allows the resumption of elongation from the new 3'terminus. GreA releases sequences of 2 to 3 nucleotides. The polypeptide is Transcription elongation factor GreA (Methylobacterium nodulans (strain LMG 21967 / CNCM I-2342 / ORS 2060)).